Here is a 420-residue protein sequence, read N- to C-terminus: Cyclin-B2-1 (420 aa).

Residues 1-61 (MDRASENRRL…EKSGKEEQKP (61 aa)) are disordered. Positions 49–60 (PMLEKSGKEEQK) are enriched in basic and acidic residues.

Belongs to the cyclin family. Cyclin AB subfamily. Interacts with CDKB2-1. As to expression, expressed in the root apices.

Involved in the control of the cell cycle at the G2/M (mitosis) transition. May activate CDKB2-1 kinase. This chain is Cyclin-B2-1 (CYCB2-1), found in Oryza sativa subsp. japonica (Rice).